A 747-amino-acid chain; its full sequence is Eukaryotic translation initiation factor 3 subunit B (747 aa).

The 87-residue stretch at 42–128 (AFVVVDGLPE…HTLRVNKLTD (87 aa)) folds into the RRM domain. WD repeat units follow at residues 195-234 (DRQH…RQRR), 236-292 (AHPF…PLRS), 310-349 (APKF…LLDK), 520-563 (LEKK…EKPE), and 578-623 (ADHY…LREE).

The protein belongs to the eIF-3 subunit B family. Component of the eukaryotic translation initiation factor 3 (eIF-3) complex.

It is found in the cytoplasm. RNA-binding component of the eukaryotic translation initiation factor 3 (eIF-3) complex, which is involved in protein synthesis of a specialized repertoire of mRNAs and, together with other initiation factors, stimulates binding of mRNA and methionyl-tRNAi to the 40S ribosome. The eIF-3 complex specifically targets and initiates translation of a subset of mRNAs involved in cell proliferation. The sequence is that of Eukaryotic translation initiation factor 3 subunit B (prt-1) from Neurospora crassa (strain ATCC 24698 / 74-OR23-1A / CBS 708.71 / DSM 1257 / FGSC 987).